The following is a 1389-amino-acid chain: DNA-directed RNA polymerase subunit beta' (1389 aa).

The Zn(2+) site is built by C73, C75, C88, and C91. 3 residues coordinate Mg(2+): D464, D466, and D468. Positions 810, 884, 891, and 894 each coordinate Zn(2+).

Belongs to the RNA polymerase beta' chain family. In terms of assembly, the RNAP catalytic core consists of 2 alpha, 1 beta, 1 beta' and 1 omega subunit. When a sigma factor is associated with the core the holoenzyme is formed, which can initiate transcription. The cofactor is Mg(2+). It depends on Zn(2+) as a cofactor.

It catalyses the reaction RNA(n) + a ribonucleoside 5'-triphosphate = RNA(n+1) + diphosphate. Its function is as follows. DNA-dependent RNA polymerase catalyzes the transcription of DNA into RNA using the four ribonucleoside triphosphates as substrates. This chain is DNA-directed RNA polymerase subunit beta', found in Pelagibacter ubique (strain HTCC1062).